The sequence spans 247 residues: ATP synthase subunit a, chloroplastic (247 aa).

5 helical membrane passes run glutamine 38 to valine 58, valine 95 to leucine 115, isoleucine 134 to serine 154, leucine 199 to leucine 219, and glycine 220 to glycine 240.

Belongs to the ATPase A chain family. F-type ATPases have 2 components, CF(1) - the catalytic core - and CF(0) - the membrane proton channel. CF(1) has five subunits: alpha(3), beta(3), gamma(1), delta(1), epsilon(1). CF(0) has four main subunits: a, b, b' and c.

It localises to the plastid. The protein resides in the chloroplast thylakoid membrane. Its function is as follows. Key component of the proton channel; it plays a direct role in the translocation of protons across the membrane. The protein is ATP synthase subunit a, chloroplastic of Populus trichocarpa (Western balsam poplar).